The chain runs to 843 residues: Alpha-L-fucosidase 2 (843 aa).

The N-terminal stretch at 1–27 (MAEKSSFFVHFSCLLLLLTIIITCGEG) is a signal peptide. 4 N-linked (GlcNAc...) asparagine glycosylation sites follow: Asn-62, Asn-253, Asn-365, and Asn-605.

This sequence belongs to the glycosyl hydrolase 95 family. Ubiquitous. Highest expression in vascular tissues, leaf trichomes, root elongation zone and emerging lateral roots.

It is found in the secreted. The protein localises to the extracellular space. Its subcellular location is the apoplast. It carries out the reaction an alpha-L-fucoside + H2O = L-fucose + an alcohol. Functionally, hydrolyzes alpha-1,2-linked fucose. Also active on fucosylated xyloglucan oligosaccharides. No activity with 3-fucosyllactose, p-nitrophenyl-alpha-I-fucopyranoside, lacto-N-fucopentaose II, lacto-N-fucopentaose III or alpha 1,6-fucosylated chitopentaose. Involved in apoplastic xyloglucan metabolism. This Arabidopsis thaliana (Mouse-ear cress) protein is Alpha-L-fucosidase 2 (FUC95A).